We begin with the raw amino-acid sequence, 434 residues long: Hydrogenobyrinate a,c-diamide synthase (434 aa).

Positions 243-434 (RIAVARDIAF…MHLIDVAGAA (192 aa)) constitute a GATase cobBQ-type domain. Cysteine 326 serves as the catalytic Nucleophile.

Belongs to the CobB/CbiA family. In terms of assembly, homodimer. The cofactor is Mg(2+).

The enzyme catalyses hydrogenobyrinate + 2 L-glutamine + 2 ATP + 2 H2O = hydrogenobyrinate a,c-diamide + 2 L-glutamate + 2 ADP + 2 phosphate + 2 H(+). It functions in the pathway cofactor biosynthesis; adenosylcobalamin biosynthesis; cob(II)yrinate a,c-diamide from precorrin-2 (aerobic route): step 9/10. Catalyzes the ATP-dependent amidation of the two carboxylate groups at positions a and c of hydrogenobyrinate, using either L-glutamine or ammonia as the nitrogen source. To a much lesser extent, can also use cobyrinate as substrate in vitro, but the physiological substrate is indeed hydrogenobyrinate, as part of the aerobic pathway for cobalamin biosynthesis. In Sinorhizobium sp, this protein is Hydrogenobyrinate a,c-diamide synthase.